The following is a 524-amino-acid chain: MEAPPDPRPHASAAAPLRAPEVARLREEQEKVVTNCQEKIQHWKKVDNDYNALQERLSTLPDKLSYNIMVPFGPFAFMPGKLVHTNEVTVLLGDNWFAKCSAKQAVGLVEHRKEHVRKTIDDLKKVMKNFESRVEFTEDLQKMSDAAGDIVDIREEIKTDFEFKAKHRIAHKPHSKPKTSDIFEAEFANDLKSKDLLADKELWDRLEELERQEELLGEIDIDSKPDTVIANGEDVSSEEEKEDQNINVNMMHQVTDSLALSSCYNSLTNSELFNGQVNSPLNYSVNGSSSYHSNEDDGDNNDDGGDSENDHDTLGVEDNSIPTIYFSHTVEPKRVRINTGKNTTLKFSEKKEEAKRKRKNSSGSGHSPQELPMIRTPADIYRVFVDVVNGEYVPRKSILKSRSRENSVCSDTSESSAADFDDRRGVLRSISCEEATCSDASESILEEEQENHQKKLLPLSVTPEAFSGTVIEKEFLSPSLTPHPAMAHPVLPTIPERKEVLSEVSEGTTKRVSKFKAARLQQKN.

Disordered stretches follow at residues 1 to 20, 284 to 320, and 335 to 373; these read MEAP…LRAP, SVNG…EDNS, and VRIN…ELPM. Residues 296–307 show a composition bias toward acidic residues; it reads DDGDNNDDGGDS. Serine 361 carries the post-translational modification Phosphoserine; by RPS6KB1. Phosphoserine is present on serine 431.

Belongs to the RNA polymerase II subunit 5-mediating protein family. In terms of assembly, homodimer. Component of the PAQosome complex which is responsible for the biogenesis of several protein complexes and which consists of R2TP complex members RUVBL1, RUVBL2, RPAP3 and PIH1D1, URI complex members PFDN2, PFDN6, PDRG1, UXT and URI1 as well as ASDURF, POLR2E and DNAAF10/WDR92. Interacts with POLR2E/RPB5, RUVBL2 and RUVBL1. Interacts with PFDN2, PFDN4 and STAP1; the interactions are phosphorylation-dependent and occur in a growth-dependent manner in the mitochondrion. Interacts with UXT. Interacts with PPP1CC; the interaction is phosphorylation-dependent and occurs in a growth factor-dependent manner. Interacts (via the middle C-terminal region) with GTF2F1 and GTF2F2. Interacts with DMAP1. Interacts with TSC1 and TSC2. Interacts with PRPF8 and EFTUD2 in a ZNHIT2-dependent manner. Post-translationally, phosphorylated. Phosphorylation occurs essentially on serine residues. Phosphorylation occurs in response to androgen treatment in prostate cancer cells in a mTOR-dependent manner. Phosphorylated; hyperhosphorylated in mitochondria in a mTORC-dependent signaling pathway. Phosphorylated at Ser-361 by RPS6KB1 in a growth factor- and rapamycin-dependent manner. S6K1-mediated mitochondrial phosphorylation at Ser-361 disrupts the URI1-PPP1CC complex in the mitochondrion, relieves PPP1CC phosphatase inhibition activity and hence engages a negative feedback diminishing RPS6KB1 kinase activity, preventing sustained S6K1-dependent signaling.

The protein resides in the nucleus. The protein localises to the cytoplasm. Its subcellular location is the mitochondrion. It is found in the cell projection. It localises to the dendrite. In terms of biological role, involved in gene transcription regulation. Acts as a transcriptional repressor in concert with the corepressor UXT to regulate androgen receptor (AR) transcription. May act as a tumor suppressor to repress AR-mediated gene transcription and to inhibit anchorage-independent growth in prostate cancer cells. Required for cell survival in ovarian cancer cells. Together with UXT, associates with chromatin to the NKX3-1 promoter region. Its function is as follows. Plays a central role in maintaining S6K1 signaling and BAD phosphorylation under normal growth conditions thereby protecting cells from potential deleterious effects of sustained S6K1 signaling. The URI1-PPP1CC complex acts as a central component of a negative feedback mechanism that counteracts excessive S6K1 survival signaling to BAD in response to growth factors. Mediates inhibition of PPP1CC phosphatase activity in mitochondria. Coordinates the regulation of nutrient-sensitive gene expression availability in a mTOR-dependent manner. Seems to be a scaffolding protein able to assemble a prefoldin-like complex that contains PFDs and proteins with roles in transcription and ubiquitination. This chain is Unconventional prefoldin RPB5 interactor (URI1), found in Bos taurus (Bovine).